The primary structure comprises 691 residues: Elongation factor G (691 aa).

The tr-type G domain maps to 8–283 (EDYRNFGIMA…AVVDYLPSPA (276 aa)). Residues 17 to 24 (AHIDAGKT), 81 to 85 (DTPGH), and 135 to 138 (NKMD) each bind GTP.

The protein belongs to the TRAFAC class translation factor GTPase superfamily. Classic translation factor GTPase family. EF-G/EF-2 subfamily.

The protein localises to the cytoplasm. In terms of biological role, catalyzes the GTP-dependent ribosomal translocation step during translation elongation. During this step, the ribosome changes from the pre-translocational (PRE) to the post-translocational (POST) state as the newly formed A-site-bound peptidyl-tRNA and P-site-bound deacylated tRNA move to the P and E sites, respectively. Catalyzes the coordinated movement of the two tRNA molecules, the mRNA and conformational changes in the ribosome. The sequence is that of Elongation factor G from Methylobacterium radiotolerans (strain ATCC 27329 / DSM 1819 / JCM 2831 / NBRC 15690 / NCIMB 10815 / 0-1).